The sequence spans 572 residues: Mitochondrial chaperone TCM62 (572 aa).

The transit peptide at 1–16 (MLRNCLRKLGNHQTKC) directs the protein to the mitochondrion. Topologically, residues 17–471 (SVKTLHTPIY…KANEPNFMTK (455 aa)) are mitochondrial matrix. The helical transmembrane segment at 472-488 (VGINAVLSAVILPSEVA) threads the bilayer. Residues 489–572 (FKNAYGYNYY…VYKKPERHKA (84 aa)) are Mitochondrial intermembrane-facing.

It belongs to the chaperonin (HSP60) family. Forms a high molecular mass protein complex of approximately 850 kDa.

The protein localises to the mitochondrion inner membrane. Chaperone. Required for the assembly of succinate dehydrogenase subunits. Ensures mitochondrial gene expression at elevated temperatures and prevents heat-aggregation of the ribosomal subunit VAR1. This is Mitochondrial chaperone TCM62 (TCM62) from Saccharomyces cerevisiae (strain ATCC 204508 / S288c) (Baker's yeast).